The chain runs to 409 residues: Secreted LysM effector Blys2 (409 aa).

An N-terminal signal peptide occupies residues 1–20 (MTRFTTTLVAALAGANLAAA). The LysM 1 domain occupies 24–71 (YKWRAHAGDTCDSLSSDWSVQVSDFIKWNPSVGANCSNGVTAGQEYCV). An N-linked (GlcNAc...) asparagine glycan is attached at Asn-58. The tract at residues 74 to 111 (NGAGSKPTTPPTGSPTTLTTAVTTASSTPTQPTDGAPS) is disordered. The segment covering 87–106 (SPTTLTTAVTTASSTPTQPT) has biased composition (low complexity). LysM domains follow at residues 129–176 (AWYK…YVCV), 206–253 (KWYK…FVCV), 283–330 (KFYK…YYCI), and 357–405 (KYYK…YICV).

This sequence belongs to the secreted LysM effector family.

Its subcellular location is the secreted. It localises to the cell wall. In terms of biological role, secreted effector that enables the plant pathogenic fungus to manipulate host defenses for successful infection. Required for the full virulence to infect insect hosts. In contrast to Blys5, Blys2 is not able to protect fungal hyphae against the hydrolytic activity of chitinase but plays an important role in evasion of insect immunities. Binds chitin. Coats and protects the cell walls of insect pathogens from host cell recognition. This chain is Secreted LysM effector Blys2, found in Beauveria bassiana (strain ARSEF 2860) (White muscardine disease fungus).